The chain runs to 456 residues: Hydroxymethylglutaryl coenzyme A synthase (456 aa).

(3S)-3-hydroxy-3-methylglutaryl-CoA is bound at residue A34. E85 functions as the Proton donor/acceptor in the catalytic mechanism. Residues C119, T161, S211, H258, K267, N335, and S369 each coordinate (3S)-3-hydroxy-3-methylglutaryl-CoA. C119 (acyl-thioester intermediate) is an active-site residue. The active-site Proton donor/acceptor is the H258.

It belongs to the thiolase-like superfamily. HMG-CoA synthase family.

It carries out the reaction acetoacetyl-CoA + acetyl-CoA + H2O = (3S)-3-hydroxy-3-methylglutaryl-CoA + CoA + H(+). Its function is as follows. HMG-CoA synthase; part of the gene cluster that mediates the biosynthesis of 1233A, a natural compound known as an inhibitor of HMG-CoA synthase in the mevalonate pathway and with antibacterial and antifungal activities. This enzyme condenses acetyl-CoA with acetoacetyl-CoA to form HMG-CoA, which is the substrate for HMG-CoA reductase. As part of the 1233A biosynthesis cluster, is involved in conferring self-resistance to 1233A. The protein is Hydroxymethylglutaryl coenzyme A synthase of Fusarium sp.